The sequence spans 66 residues: Regulator of G-protein signaling 11 (66 aa).

The RGS domain occupies 1–66 (EACEELRFGG…DAAQLHIYML (66 aa)).

Heterodimer with Gbeta5. Interacts with RGS7BP, leading to regulate the subcellular location of the heterodimer formed with Gbeta5.

Inhibits signal transduction by increasing the GTPase activity of G protein alpha subunits thereby driving them into their inactive GDP-bound form. The chain is Regulator of G-protein signaling 11 (Rgs11) from Rattus norvegicus (Rat).